We begin with the raw amino-acid sequence, 725 residues long: Lipoamidase (725 aa).

The disordered stretch occupies residues 1–52 (MLAQESILETTVQTETESVTTETSQTVANLESETTSQTVMQEKESSSAIAES). The segment covering 9–27 (ETTVQTETESVTTETSQTV) has biased composition (low complexity). The span at 28–40 (ANLESETTSQTVM) shows a compositional bias: polar residues. Catalysis depends on charge relay system residues Lys-159 and Ser-235. Catalysis depends on Ser-259, which acts as the Acyl-ester intermediate. A disordered region spans residues 551–686 (KINQPHVEEP…NKSMIGKQEQ (136 aa)). Positions 556–637 (HVEEPDKDKE…TSEGPIEGKD (82 aa)) are enriched in basic and acidic residues. Positions 650–661 (SGSSLDNSLNSS) are enriched in low complexity. The span at 662 to 679 (ANQGTKSTESTHAFSNKS) shows a compositional bias: polar residues. A helical membrane pass occupies residues 700 to 720 (PSTFWIVLGGAFLVTSGTIYI).

It belongs to the amidase family. In terms of assembly, homodimer in solution.

It localises to the cell membrane. It carries out the reaction N(6)-[(R)-lipoyl]-L-lysyl-[lipoyl-carrier protein] + H2O = L-lysyl-[lipoyl-carrier protein] + (R)-lipoate. With respect to regulation, lipoamidase activity is slightly inhibited by p-chloromercuribenzoate. In terms of biological role, amidohydrolase that releases lipoic acid from the protein-bound form. Cleaves the amide bond that links lipoic acid to the lipoylated lysine epsilon-amino groups, leading to the formation of free lipoic acid plus the unmodified protein. Shows activity toward both high molecular weight protein substrates such as a lipoyl domain and intact 2-oxoacid dehydrogenases as well as small molecule substrates such as lipoyl-lysine. Also acts on small biotinylated substrates. Hydrolyzes the synthetic substrates methyl lipoate and lipoamide. The physiologically important substrates are probably lipoyl-lysine and small peptides containing lipoyl-lysine. Lpa seems likely to enable this bacterium to utilize amide-linked forms of lipoic acid that otherwise could not be assimilated. In Enterococcus faecalis (Streptococcus faecalis), this protein is Lipoamidase.